Here is a 309-residue protein sequence, read N- to C-terminus: GDP-6-deoxy-D-mannose reductase (309 aa).

NADP(+) contacts are provided by residues 11-12, arginine 32, 47-48, and 71-73; these read FV, DI, and AKS. Position 114–115 (114–115) interacts with substrate; sequence SS. Tyrosine 140 contacts NADP(+). Residues asparagine 169, aspartate 183, arginine 209, and 269–272 each bind substrate; that span reads RPSE.

Belongs to the NAD(P)-dependent epimerase/dehydratase family. GDP-6-deoxy-D-mannose reductase subfamily.

The catalysed reaction is GDP-alpha-D-rhamnose + NAD(+) = GDP-4-dehydro-alpha-D-rhamnose + NADH + H(+). The enzyme catalyses GDP-alpha-D-rhamnose + NADP(+) = GDP-4-dehydro-alpha-D-rhamnose + NADPH + H(+). Functionally, reductase that catalyzes the conversion of GDP-6-deoxy-D-mannose to GDP-4-dehydro-6-deoxy-D-mannose (GDP-D-rhamnose). This Aneurinibacillus thermoaerophilus protein is GDP-6-deoxy-D-mannose reductase (rmd).